Consider the following 138-residue polypeptide: Large ribosomal subunit protein uL14 (138 aa).

Belongs to the universal ribosomal protein uL14 family. As to quaternary structure, part of the 50S ribosomal subunit. Forms a cluster with proteins L3 and L24e, part of which may contact the 16S rRNA in 2 intersubunit bridges. Contacts initiation factor aIF-6.

Its subcellular location is the cytoplasm. Binds to 23S rRNA. Forms part of two intersubunit bridges in the 70S ribosome. The protein is Large ribosomal subunit protein uL14 of Saccharolobus solfataricus (strain ATCC 35092 / DSM 1617 / JCM 11322 / P2) (Sulfolobus solfataricus).